The following is a 257-amino-acid chain: Phosphonates import ATP-binding protein PhnC (257 aa).

In terms of domain architecture, ABC transporter spans 4–248; the sequence is IEFKDVNKVY…VFNDIYGRKL (245 aa). Position 37–44 (37–44) interacts with ATP; sequence GLSGAGKS.

The protein belongs to the ABC transporter superfamily. Phosphonates importer (TC 3.A.1.9.1) family. In terms of assembly, the complex is composed of two ATP-binding proteins (PhnC), two transmembrane proteins (PhnE) and a solute-binding protein (PhnD).

The protein resides in the cell membrane. The enzyme catalyses phosphonate(out) + ATP + H2O = phosphonate(in) + ADP + phosphate + H(+). Functionally, part of the ABC transporter complex PhnCDE involved in phosphonates import. Responsible for energy coupling to the transport system. This chain is Phosphonates import ATP-binding protein PhnC, found in Staphylococcus haemolyticus (strain JCSC1435).